Consider the following 1125-residue polypeptide: Protein efr-3 (1125 aa).

Disordered regions lie at residues 240–261 (RTSN…PNPI), 471–493 (RPSR…NGAA), 788–819 (TSPP…KDET), and 845–1093 (QAGS…LGEK). A compositionally biased stretch (polar residues) spans 242 to 252 (SNATAQPSETT). Over residues 788-798 (TSPPTSPTTSP) the composition is skewed to low complexity. Residues 845-854 (QAGSSQTASL) show a composition bias toward polar residues. The span at 855 to 877 (NGTNGTHRNTVNNNNRLGVNGVT) shows a compositional bias: low complexity. 3 stretches are compositionally biased toward polar residues: residues 878–896 (SPNG…TGPN), 975–1011 (LSFN…TQQL), and 1046–1071 (SRTT…TSSK).

It belongs to the EFR3 family.

This Neurospora crassa (strain ATCC 24698 / 74-OR23-1A / CBS 708.71 / DSM 1257 / FGSC 987) protein is Protein efr-3 (efr-3).